The chain runs to 73 residues: Translation initiation factor IF-1 (73 aa).

In terms of domain architecture, S1-like spans 1–73 (MAKKEDTIVL…TKARVVYRHR (73 aa)).

The protein belongs to the IF-1 family. As to quaternary structure, component of the 30S ribosomal translation pre-initiation complex which assembles on the 30S ribosome in the order IF-2 and IF-3, IF-1 and N-formylmethionyl-tRNA(fMet); mRNA recruitment can occur at any time during PIC assembly.

Its subcellular location is the cytoplasm. Functionally, one of the essential components for the initiation of protein synthesis. Stabilizes the binding of IF-2 and IF-3 on the 30S subunit to which N-formylmethionyl-tRNA(fMet) subsequently binds. Helps modulate mRNA selection, yielding the 30S pre-initiation complex (PIC). Upon addition of the 50S ribosomal subunit IF-1, IF-2 and IF-3 are released leaving the mature 70S translation initiation complex. The chain is Translation initiation factor IF-1 from Chlamydia caviae (strain ATCC VR-813 / DSM 19441 / 03DC25 / GPIC) (Chlamydophila caviae).